A 773-amino-acid chain; its full sequence is Phenylalanine--tRNA ligase beta subunit (773 aa).

Positions 39–150 (LKAPDKVVVG…GKLELGRPLN (112 aa)) constitute a tRNA-binding domain. Positions 391–467 (KELPIIPISI…RIIGIDNIAS (77 aa)) constitute a B5 domain. Mg(2+) contacts are provided by aspartate 445, aspartate 451, glutamate 454, and glutamate 455. Residues 682-773 (SKFPAITRDL…TLKNLGLDLR (92 aa)) enclose the FDX-ACB domain.

It belongs to the phenylalanyl-tRNA synthetase beta subunit family. Type 1 subfamily. In terms of assembly, tetramer of two alpha and two beta subunits. It depends on Mg(2+) as a cofactor.

It localises to the cytoplasm. It carries out the reaction tRNA(Phe) + L-phenylalanine + ATP = L-phenylalanyl-tRNA(Phe) + AMP + diphosphate + H(+). This is Phenylalanine--tRNA ligase beta subunit (pheT) from Campylobacter jejuni subsp. jejuni serotype O:2 (strain ATCC 700819 / NCTC 11168).